Here is a 350-residue protein sequence, read N- to C-terminus: Phosphoribosylformylglycinamidine cyclo-ligase (350 aa).

The protein belongs to the AIR synthase family.

The protein localises to the cytoplasm. It catalyses the reaction 2-formamido-N(1)-(5-O-phospho-beta-D-ribosyl)acetamidine + ATP = 5-amino-1-(5-phospho-beta-D-ribosyl)imidazole + ADP + phosphate + H(+). It participates in purine metabolism; IMP biosynthesis via de novo pathway; 5-amino-1-(5-phospho-D-ribosyl)imidazole from N(2)-formyl-N(1)-(5-phospho-D-ribosyl)glycinamide: step 2/2. This Cupriavidus metallidurans (strain ATCC 43123 / DSM 2839 / NBRC 102507 / CH34) (Ralstonia metallidurans) protein is Phosphoribosylformylglycinamidine cyclo-ligase.